Here is a 117-residue protein sequence, read N- to C-terminus: Large ribosomal subunit protein bL20c (117 aa).

The protein belongs to the bacterial ribosomal protein bL20 family.

The protein localises to the plastid. It is found in the chloroplast. Its function is as follows. Binds directly to 23S ribosomal RNA and is necessary for the in vitro assembly process of the 50S ribosomal subunit. It is not involved in the protein synthesizing functions of that subunit. The sequence is that of Large ribosomal subunit protein bL20c (rpl20) from Bigelowiella natans (Pedinomonas minutissima).